The following is a 391-amino-acid chain: Ferrochelatase (391 aa).

Histidine 196 and glutamate 281 together coordinate Fe cation.

This sequence belongs to the ferrochelatase family.

It localises to the cytoplasm. The catalysed reaction is heme b + 2 H(+) = protoporphyrin IX + Fe(2+). Its pathway is porphyrin-containing compound metabolism; protoheme biosynthesis; protoheme from protoporphyrin-IX: step 1/1. Functionally, catalyzes the ferrous insertion into protoporphyrin IX. The protein is Ferrochelatase of Prochlorococcus marinus (strain MIT 9215).